A 305-amino-acid chain; its full sequence is Methionyl-tRNA formyltransferase (305 aa).

Residue 111-114 (SLLP) participates in (6S)-5,6,7,8-tetrahydrofolate binding.

This sequence belongs to the Fmt family.

The catalysed reaction is L-methionyl-tRNA(fMet) + (6R)-10-formyltetrahydrofolate = N-formyl-L-methionyl-tRNA(fMet) + (6S)-5,6,7,8-tetrahydrofolate + H(+). Functionally, attaches a formyl group to the free amino group of methionyl-tRNA(fMet). The formyl group appears to play a dual role in the initiator identity of N-formylmethionyl-tRNA by promoting its recognition by IF2 and preventing the misappropriation of this tRNA by the elongation apparatus. The polypeptide is Methionyl-tRNA formyltransferase (Helicobacter pylori (strain J99 / ATCC 700824) (Campylobacter pylori J99)).